The chain runs to 306 residues: Tyrosine recombinase EUBREC_2677 (306 aa).

Positions Asn-2–Glu-84 constitute a Core-binding (CB) domain. Residues Ile-106–Ile-296 form the Tyr recombinase domain. Active-site residues include Arg-155, Lys-179, His-248, Arg-251, and His-274. Tyr-283 (O-(3'-phospho-DNA)-tyrosine intermediate) is an active-site residue.

Belongs to the 'phage' integrase family.

It localises to the cytoplasm. In terms of biological role, site-specific tyrosine recombinase, which acts by catalyzing the cutting and rejoining of the recombining DNA molecules. In Agathobacter rectalis (strain ATCC 33656 / DSM 3377 / JCM 17463 / KCTC 5835 / VPI 0990) (Eubacterium rectale), this protein is Tyrosine recombinase EUBREC_2677.